The sequence spans 115 residues: Large ribosomal subunit protein P2 (115 aa).

Residue methionine 1 is modified to N-acetylmethionine. Phosphoserine occurs at positions 17 and 19. At lysine 21 the chain carries N6-acetyllysine; alternate. The residue at position 21 (lysine 21) is an N6-succinyllysine; alternate. Positions 76 to 90 are enriched in low complexity; sequence APGSAAPAAGSAPAA. The interval 76 to 115 is disordered; sequence APGSAAPAAGSAPAAAEEKKEEKKEESEESDDDMGFGLFD. Serine 79 and serine 86 each carry phosphoserine. The segment covering 91 to 101 has biased composition (basic and acidic residues); it reads AEEKKEEKKEE. 2 positions are modified to phosphoserine: serine 102 and serine 105.

It belongs to the eukaryotic ribosomal protein P1/P2 family. In terms of assembly, heterodimer with RPLP1 at the lateral ribosomal stalk of the large ribosomal subunit.

Functionally, plays an important role in the elongation step of protein synthesis. The sequence is that of Large ribosomal subunit protein P2 (RPLP2) from Bos taurus (Bovine).